A 257-amino-acid polypeptide reads, in one-letter code: Pimeloyl-[acyl-carrier protein] methyl ester esterase (257 aa).

One can recognise an AB hydrolase-1 domain in the interval 16 to 240 (LVLIHGWGMN…EQASHAPFIS (225 aa)). Residues Trp-22, 82 to 83 (SL), and 143 to 147 (FMALQ) contribute to the substrate site. Ser-82 (nucleophile) is an active-site residue. Catalysis depends on residues Asp-207 and His-235. His-235 contacts substrate.

This sequence belongs to the AB hydrolase superfamily. Carboxylesterase BioH family. In terms of assembly, monomer.

The protein localises to the cytoplasm. The enzyme catalyses 6-carboxyhexanoyl-[ACP] methyl ester + H2O = 6-carboxyhexanoyl-[ACP] + methanol + H(+). The protein operates within cofactor biosynthesis; biotin biosynthesis. Its function is as follows. The physiological role of BioH is to remove the methyl group introduced by BioC when the pimeloyl moiety is complete. It allows to synthesize pimeloyl-ACP via the fatty acid synthetic pathway through the hydrolysis of the ester bonds of pimeloyl-ACP esters. The sequence is that of Pimeloyl-[acyl-carrier protein] methyl ester esterase from Aliivibrio fischeri (strain MJ11) (Vibrio fischeri).